The chain runs to 492 residues: Proline--tRNA ligase (492 aa).

It belongs to the class-II aminoacyl-tRNA synthetase family. ProS type 3 subfamily. In terms of assembly, homodimer.

Its subcellular location is the cytoplasm. It catalyses the reaction tRNA(Pro) + L-proline + ATP = L-prolyl-tRNA(Pro) + AMP + diphosphate. Catalyzes the attachment of proline to tRNA(Pro) in a two-step reaction: proline is first activated by ATP to form Pro-AMP and then transferred to the acceptor end of tRNA(Pro). In Flavobacterium psychrophilum (strain ATCC 49511 / DSM 21280 / CIP 103535 / JIP02/86), this protein is Proline--tRNA ligase.